The chain runs to 661 residues: UvrABC system protein C (661 aa).

The GIY-YIG domain maps to 25 to 104 (AEPGCYLMRD…IKNHQPHFNV (80 aa)). Residues 214 to 249 (DELQHLLQEQMERYAERMDYESAARVRDQLQGLDQL) form the UVR domain. A compositionally biased stretch (basic and acidic residues) spans 636-652 (FFHPSDEGTDADARAAL). A disordered region spans residues 636 to 661 (FFHPSDEGTDADARAALEEQPQELSA).

Belongs to the UvrC family. In terms of assembly, interacts with UvrB in an incision complex.

It is found in the cytoplasm. Functionally, the UvrABC repair system catalyzes the recognition and processing of DNA lesions. UvrC both incises the 5' and 3' sides of the lesion. The N-terminal half is responsible for the 3' incision and the C-terminal half is responsible for the 5' incision. The protein is UvrABC system protein C of Synechococcus sp. (strain CC9605).